A 1374-amino-acid polypeptide reads, in one-letter code: DNA-directed RNA polymerase subunit beta (1374 aa).

Belongs to the RNA polymerase beta chain family. The RNAP catalytic core consists of 2 alpha, 1 beta, 1 beta' and 1 omega subunit. When a sigma factor is associated with the core the holoenzyme is formed, which can initiate transcription.

The enzyme catalyses RNA(n) + a ribonucleoside 5'-triphosphate = RNA(n+1) + diphosphate. In terms of biological role, DNA-dependent RNA polymerase catalyzes the transcription of DNA into RNA using the four ribonucleoside triphosphates as substrates. The protein is DNA-directed RNA polymerase subunit beta of Paracidovorax citrulli (strain AAC00-1) (Acidovorax citrulli).